We begin with the raw amino-acid sequence, 367 residues long: Glutamate 5-kinase (367 aa).

Lysine 9 provides a ligand contact to ATP. The substrate site is built by serine 49, aspartate 136, and asparagine 148. ATP contacts are provided by residues 168 to 169 and 210 to 216; these read TD and TGGMKSK. One can recognise a PUA domain in the interval 276 to 350; that stretch reads SGQIEVDAGA…GMQSQDIQAR (75 aa).

Belongs to the glutamate 5-kinase family.

It localises to the cytoplasm. The enzyme catalyses L-glutamate + ATP = L-glutamyl 5-phosphate + ADP. Its pathway is amino-acid biosynthesis; L-proline biosynthesis; L-glutamate 5-semialdehyde from L-glutamate: step 1/2. Functionally, catalyzes the transfer of a phosphate group to glutamate to form L-glutamate 5-phosphate. The sequence is that of Glutamate 5-kinase from Bacillus mycoides (strain KBAB4) (Bacillus weihenstephanensis).